The chain runs to 614 residues: MMAADIPRVTTPLSSLVQVPQEEDRQEEEVTTMILEDDSWVQEAVLQEDGPESEPFPQSAGKGGPQEEVTRGPQGALGRLRELCRRWLRPEVHTKEQMLTMLPKEIQAWLQEHRPESSEEAAALVEDLTQTLQDSDFEIQSENGENCNQDMFENESRKIFSEMPEGESAQHSDGESDFERDAGIQRLQGHSPGEDHGEVVSQDREVGQLIGLQGTYLGEKPYECPQCGKTFSRKSHLITHERTHTGEKYYKCDECGKSFSDGSNFSRHQTTHTGEKPYKCRDCGKSFSRSANLITHQRIHTGEKPFQCAECGKSFSRSPNLIAHQRTHTGEKPYSCPECGKSFGNRSSLNTHQGIHTGEKPYECKECGESFSYNSNLIRHQRIHTGEKPYKCTDCGQRFSQSSALITHRRTHTGEKPYQCSECGKSFSRSSNLATHRRTHMVEKPYKCGVCGKSFSQSSSLIAHQGMHTGEKPYECLTCGESFSWSSNLLKHQRIHTGEKPYKCSECGKCFSQRSQLVVHQRTHTGEKPYKCLMCGKSFSRGSILVMHQRAHLGDKPYRCPECGKGFSWNSVLIIHQRIHTGEKPYKCPECGKGFSNSSNFITHQRTHMKEKLY.

Disordered regions lie at residues 1–26 and 43–76; these read MMAADIPRVTTPLSSLVQVPQEEDRQ and EAVLQEDGPESEPFPQSAGKGGPQEEVTRGPQGA. The SCAN box domain maps to 59 to 132; it reads SAGKGGPQEE…ALVEDLTQTL (74 aa). 14 C2H2-type zinc fingers span residues 222 to 244, 250 to 272, 278 to 300, 306 to 328, 334 to 356, 362 to 384, 390 to 412, 418 to 440, 446 to 468, 474 to 496, 502 to 524, 530 to 552, 558 to 580, and 586 to 608; these read YECPQCGKTFSRKSHLITHERTH, YKCDECGKSFSDGSNFSRHQTTH, YKCRDCGKSFSRSANLITHQRIH, FQCAECGKSFSRSPNLIAHQRTH, YSCPECGKSFGNRSSLNTHQGIH, YECKECGESFSYNSNLIRHQRIH, YKCTDCGQRFSQSSALITHRRTH, YQCSECGKSFSRSSNLATHRRTH, YKCGVCGKSFSQSSSLIAHQGMH, YECLTCGESFSWSSNLLKHQRIH, YKCSECGKCFSQRSQLVVHQRTH, YKCLMCGKSFSRGSILVMHQRAH, YRCPECGKGFSWNSVLIIHQRIH, and YKCPECGKGFSNSSNFITHQRTH.

Belongs to the krueppel C2H2-type zinc-finger protein family.

Its subcellular location is the nucleus. Its function is as follows. May be involved in transcriptional regulation during the post-meiotic stages of spermatogenesis. In Homo sapiens (Human), this protein is Zinc finger and SCAN domain-containing protein 2 (ZSCAN2).